Here is a 316-residue protein sequence, read N- to C-terminus: Probable 5-dehydro-4-deoxyglucarate dehydratase (316 aa).

This sequence belongs to the DapA family.

The enzyme catalyses 5-dehydro-4-deoxy-D-glucarate + H(+) = 2,5-dioxopentanoate + CO2 + H2O. It participates in carbohydrate acid metabolism; D-glucarate degradation; 2,5-dioxopentanoate from D-glucarate: step 2/2. This chain is Probable 5-dehydro-4-deoxyglucarate dehydratase, found in Corynebacterium glutamicum (strain ATCC 13032 / DSM 20300 / JCM 1318 / BCRC 11384 / CCUG 27702 / LMG 3730 / NBRC 12168 / NCIMB 10025 / NRRL B-2784 / 534).